A 105-amino-acid chain; its full sequence is Transcriptional regulator SutA (105 aa).

Acidic residues predominate over residues Met1–Glu37. The interval Met1–Ile105 is disordered. Composition is skewed to basic and acidic residues over residues Ala59–Glu83 and Pro92–Ile105.

As to quaternary structure, interacts with RNA polymerase.

Its function is as follows. Causes widespread changes in gene expression, and plays a direct role in the regulation of genes encoding ribosomal components. Associates with chromosomal DNA through interaction with RNA polymerase. Contributes to biofilm formation and secondary metabolite production. Important during transitions to and from the survival state. The polypeptide is Transcriptional regulator SutA (Pseudomonas aeruginosa (strain UCBPP-PA14)).